The following is a 748-amino-acid chain: Long-chain-alcohol oxidase FAO4B (748 aa).

Residues 1 to 18 (MEDVRRRNRGHPLLRSKK) are compositionally biased toward basic residues. Positions 1–25 (MEDVRRRNRGHPLLRSKKRGEGYNH) are disordered. The next 2 helical transmembrane spans lie at 89–109 (IILM…SLCL) and 140–160 (FLLP…FYFF). Residue 238 to 253 (CDAVVVGSGSGGGVAA) participates in FAD binding. Residue His679 is the Proton acceptor of the active site.

It belongs to the GMC oxidoreductase family.

It localises to the membrane. It carries out the reaction a long-chain primary fatty alcohol + O2 = a long-chain fatty aldehyde + H2O2. Long-chain fatty alcohol oxidase involved in the omega-oxidation pathway of lipid degradation. This Arabidopsis thaliana (Mouse-ear cress) protein is Long-chain-alcohol oxidase FAO4B (FAO4B).